Here is a 697-residue protein sequence, read N- to C-terminus: PHD finger protein At2g01810 (697 aa).

Disordered stretches follow at residues 319 to 362 (DENS…QYYS) and 457 to 478 (EQKRKKKRKVKPQETSECTSTT). Basic and acidic residues predominate over residues 339–349 (SGRDTVLDDHN). The segment at 635 to 685 (TVDCKCGARDDDGERMVACDACKVWHHTLCNSIEDDEAVPSVFLCNMCYGD) adopts a PHD-type zinc-finger fold.

Its subcellular location is the nucleus. The protein is PHD finger protein At2g01810 of Arabidopsis thaliana (Mouse-ear cress).